The following is a 628-amino-acid chain: NUAK family SNF1-like kinase 2 (628 aa).

Met1 bears the N-acetylmethionine mark. The Protein kinase domain occupies 53 to 303 (YEFLETLGKG…LEDVASHWWV (251 aa)). Residues 59–67 (LGKGTYGKV) and Lys81 each bind ATP. Asp175 acts as the Proton acceptor in catalysis. Thr208 bears the Phosphothreonine mark. Disordered stretches follow at residues 355–492 (KQHA…PQAS) and 522–570 (GSLD…PLRG). The segment covering 428 to 444 (ELSPIPVSPGQAAPPLP) has biased composition (pro residues). Ser435 bears the Phosphoserine mark. A compositionally biased stretch (low complexity) spans 457–469 (SGYYSSPEPSESG). Phosphoserine occurs at positions 523, 544, 547, and 573.

Belongs to the protein kinase superfamily. CAMK Ser/Thr protein kinase family. SNF1 subfamily. The cofactor is Mg(2+). Phosphorylated at Thr-208 by STK11/LKB1 in complex with STE20-related adapter-alpha (STRADA) pseudo kinase and CAB39. Autophosphorylation is also possible at Thr-208.

The catalysed reaction is L-seryl-[protein] + ATP = O-phospho-L-seryl-[protein] + ADP + H(+). It carries out the reaction L-threonyl-[protein] + ATP = O-phospho-L-threonyl-[protein] + ADP + H(+). Activated by phosphorylation on Thr-208. Stress-activated kinase involved in tolerance to glucose starvation. Induces cell-cell detachment by increasing F-actin conversion to G-actin. Expression is induced by CD95 or TNF-alpha, via NF-kappa-B. Protects cells from CD95-mediated apoptosis and is required for the increased motility and invasiveness of CD95-activated tumor cells. Phosphorylates LATS1 and LATS2. Plays a key role in neural tube closure during embryonic development through LATS2 phosphorylation and regulation of the nuclear localization of YAP1 a critical downstream regulatory target in the Hippo signaling pathway. The protein is NUAK family SNF1-like kinase 2 of Pongo abelii (Sumatran orangutan).